We begin with the raw amino-acid sequence, 348 residues long: Probable mitochondrial adenine nucleotide transporter BTL1 (348 aa).

3 Solcar repeats span residues 46 to 129 (SREA…VKRA), 157 to 241 (SWIS…MKTS), and 251 to 338 (LSRP…WKDI). 6 helical membrane passes run 52-72 (FLSGALAGAMTKAVLAPLETI), 104-124 (GNEINMIRIIPTQAIELGTFE), 156-176 (ISWISPVAVAGASAGIASTLV), 213-233 (FYAGLGPTLVGMLPYSTCYYF), 256-276 (MLVLGALAGLTASTISFPLEV), and 321-341 (VMPSSGITWVFYEAWKDILLA).

Belongs to the mitochondrial carrier (TC 2.A.29) family.

The protein localises to the mitochondrion inner membrane. Its function is as follows. Probable mitochondrial adenylate carrier that catalyzes the transport of ATP, ADP and AMP. This Arabidopsis thaliana (Mouse-ear cress) protein is Probable mitochondrial adenine nucleotide transporter BTL1.